The following is a 245-amino-acid chain: DNA repair protein RecO (245 aa).

It belongs to the RecO family.

Functionally, involved in DNA repair and RecF pathway recombination. This chain is DNA repair protein RecO, found in Porphyromonas gingivalis (strain ATCC 33277 / DSM 20709 / CIP 103683 / JCM 12257 / NCTC 11834 / 2561).